The chain runs to 278 residues: Shikimate dehydrogenase (NADP(+)) (278 aa).

Shikimate is bound by residues 14–16 (SKS) and threonine 61. Lysine 65 serves as the catalytic Proton acceptor. The shikimate site is built by asparagine 86 and aspartate 102. NADP(+)-binding positions include 127 to 131 (GAGGA), 151 to 156 (NRTASK), and methionine 221. Tyrosine 223 is a binding site for shikimate. Glycine 245 lines the NADP(+) pocket.

Belongs to the shikimate dehydrogenase family. As to quaternary structure, homodimer.

It catalyses the reaction shikimate + NADP(+) = 3-dehydroshikimate + NADPH + H(+). It functions in the pathway metabolic intermediate biosynthesis; chorismate biosynthesis; chorismate from D-erythrose 4-phosphate and phosphoenolpyruvate: step 4/7. Functionally, involved in the biosynthesis of the chorismate, which leads to the biosynthesis of aromatic amino acids. Catalyzes the reversible NADPH linked reduction of 3-dehydroshikimate (DHSA) to yield shikimate (SA). The chain is Shikimate dehydrogenase (NADP(+)) from Saccharophagus degradans (strain 2-40 / ATCC 43961 / DSM 17024).